Reading from the N-terminus, the 457-residue chain is MDHLPIFCQLRDRDCLIVGGGDVAERKARLLLEAGARLTVNALTFIPQFTVWANEGMLTLVKGPFDETLLDSCWLAIAATDDDTVNQRVSDAAESRRIFCNVVDAPKAASFIMPSIIDRSPLMVAVSSGGTSPVLARLLREKLESLLPQHLGQVARYAGQLRARVKKQFATMGERRRFWEKFFVNDRLAQSLANADEKAVNATTERLFSEPLDHRGEVVLVGAGPGDAGLLTLKGLQQIQQADIVVYDRLVSDDIMNLVRRDADRVFVGKRAGYHCVPQEEINQILLREAQKGKRVVRLKGGDPFIFGRGGEELETLCHAGIPFSVVPGITAASGCSAYSGIPLTHRDYAQSVRLVTGHLKTGGELDWENLAAEKQTLVFYMGLNQAATIQEKLIAFGMQADMPVALVENGTSVKQRVVHGVLTQLGELAQQVESPALIIVGRVVGLRDKLNWFSNY.

The tract at residues 1-204 is precorrin-2 dehydrogenase /sirohydrochlorin ferrochelatase; it reads MDHLPIFCQL…ADEKAVNATT (204 aa). Residues 22 to 23 and 43 to 44 each bind NAD(+); these read DV and LT. Ser-128 carries the phosphoserine modification. Residues 216 to 457 form a uroporphyrinogen-III C-methyltransferase region; the sequence is GEVVLVGAGP…RDKLNWFSNY (242 aa). Pro-225 provides a ligand contact to S-adenosyl-L-methionine. Asp-248 functions as the Proton acceptor in the catalytic mechanism. Lys-270 serves as the catalytic Proton donor. Residues 301 to 303, Ile-306, 331 to 332, Met-382, and Gly-411 contribute to the S-adenosyl-L-methionine site; these read GGD and TA.

In the N-terminal section; belongs to the precorrin-2 dehydrogenase / sirohydrochlorin ferrochelatase family. This sequence in the C-terminal section; belongs to the precorrin methyltransferase family.

It catalyses the reaction uroporphyrinogen III + 2 S-adenosyl-L-methionine = precorrin-2 + 2 S-adenosyl-L-homocysteine + H(+). The catalysed reaction is precorrin-2 + NAD(+) = sirohydrochlorin + NADH + 2 H(+). It carries out the reaction siroheme + 2 H(+) = sirohydrochlorin + Fe(2+). It functions in the pathway cofactor biosynthesis; adenosylcobalamin biosynthesis; precorrin-2 from uroporphyrinogen III: step 1/1. Its pathway is cofactor biosynthesis; adenosylcobalamin biosynthesis; sirohydrochlorin from precorrin-2: step 1/1. It participates in porphyrin-containing compound metabolism; siroheme biosynthesis; precorrin-2 from uroporphyrinogen III: step 1/1. The protein operates within porphyrin-containing compound metabolism; siroheme biosynthesis; siroheme from sirohydrochlorin: step 1/1. It functions in the pathway porphyrin-containing compound metabolism; siroheme biosynthesis; sirohydrochlorin from precorrin-2: step 1/1. Multifunctional enzyme that catalyzes the SAM-dependent methylations of uroporphyrinogen III at position C-2 and C-7 to form precorrin-2 via precorrin-1. Then it catalyzes the NAD-dependent ring dehydrogenation of precorrin-2 to yield sirohydrochlorin. Finally, it catalyzes the ferrochelation of sirohydrochlorin to yield siroheme. This is Siroheme synthase from Salmonella dublin (strain CT_02021853).